The primary structure comprises 549 residues: Glucoamylase, intracellular sporulation-specific (549 aa).

Residue W198 participates in substrate binding. D261 functions as the Proton acceptor in the catalytic mechanism. Residue E264 is the Proton donor of the active site.

This sequence belongs to the glycosyl hydrolase 15 family.

The catalysed reaction is Hydrolysis of terminal (1-&gt;4)-linked alpha-D-glucose residues successively from non-reducing ends of the chains with release of beta-D-glucose.. This is Glucoamylase, intracellular sporulation-specific (SGA1) from Saccharomyces cerevisiae (strain ATCC 204508 / S288c) (Baker's yeast).